The following is a 300-amino-acid chain: Transmembrane protein 158 (300 aa).

The signal sequence occupies residues 1–20 (MLPLLAALLAAACPLPPVRG). A glycan (N-linked (GlcNAc...) asparagine) is linked at Asn75. A run of 2 helical transmembrane segments spans residues 231–251 (LVIV…IAGF) and 273–293 (VPAG…AAAV).

It belongs to the TMEM158 family. In terms of processing, N-glycosylated.

It localises to the membrane. Its function is as follows. Receptor for brain injury-derived neurotrophic peptide (BINP), a synthetic 13-mer peptide. The polypeptide is Transmembrane protein 158 (TMEM158) (Homo sapiens (Human)).